The sequence spans 127 residues: Large ribosomal subunit protein bL20 (127 aa).

The protein belongs to the bacterial ribosomal protein bL20 family.

Functionally, binds directly to 23S ribosomal RNA and is necessary for the in vitro assembly process of the 50S ribosomal subunit. It is not involved in the protein synthesizing functions of that subunit. The chain is Large ribosomal subunit protein bL20 from Corynebacterium urealyticum (strain ATCC 43042 / DSM 7109).